Reading from the N-terminus, the 65-residue chain is Metallothionein-like protein 3B (65 aa).

Belongs to the metallothionein superfamily. Type 15 family.

Functionally, metallothioneins have a high content of cysteine residues that bind various heavy metals. The polypeptide is Metallothionein-like protein 3B (MT3B) (Oryza sativa subsp. indica (Rice)).